The chain runs to 1204 residues: ATP-dependent helicase/nuclease subunit A (1204 aa).

A UvrD-like helicase ATP-binding domain is found at 2–469 (TKFTKEQNQA…IVLSDNFRST (468 aa)). Residue 23 to 30 (ASAGSGKT) coordinates ATP. One can recognise a UvrD-like helicase C-terminal domain in the interval 496 to 784 (EGQLQFGATY…KLMTIHASKG (289 aa)).

It belongs to the helicase family. AddA subfamily. Heterodimer of AddA and AddB/RexB. The cofactor is Mg(2+).

It catalyses the reaction Couples ATP hydrolysis with the unwinding of duplex DNA by translocating in the 3'-5' direction.. The enzyme catalyses ATP + H2O = ADP + phosphate + H(+). The heterodimer acts as both an ATP-dependent DNA helicase and an ATP-dependent, dual-direction single-stranded exonuclease. Recognizes the chi site generating a DNA molecule suitable for the initiation of homologous recombination. The AddA nuclease domain is required for chi fragment generation; this subunit has the helicase and 3' -&gt; 5' nuclease activities. This chain is ATP-dependent helicase/nuclease subunit A, found in Lactobacillus johnsonii (strain CNCM I-12250 / La1 / NCC 533).